The primary structure comprises 142 residues: MKTFVAKPETVKRDWYVVDATGKTLGRLAAELARRLRGKHKAEYTPHVDTGDYIVVINAEKVAVTGNKETDKLYYWHTGYVGGIKQATFKEMIARRPEAVIEIAVKGMLPKGPLGRAMFRKLKVYAGSEHNHAAQQPQVLDI.

This sequence belongs to the universal ribosomal protein uL13 family. Part of the 50S ribosomal subunit.

This protein is one of the early assembly proteins of the 50S ribosomal subunit, although it is not seen to bind rRNA by itself. It is important during the early stages of 50S assembly. This Histophilus somni (strain 2336) (Haemophilus somnus) protein is Large ribosomal subunit protein uL13.